A 1484-amino-acid chain; its full sequence is Ral GTPase-activating protein subunit beta (1484 aa).

Disordered stretches follow at residues 355-437 (PRSD…APRR) and 699-728 (ENNL…PDSE). Residue S359 is modified to Phosphoserine. Phosphothreonine is present on residues T363 and T379. 3 stretches are compositionally biased toward polar residues: residues 369–381 (SMPQ…TTPP), 392–428 (NKAT…TSSE), and 701–725 (NLKS…PTTP). A phosphoserine mark is found at S421 and S710. T724 bears the Phosphothreonine mark. In terms of domain architecture, Rap-GAP spans 1138–1382 (IGYLDLLPCR…TTLEKEVPVI (245 aa)). At S1275 the chain carries Phosphoserine. Positions 1297–1325 (PNHTDSLNSSQRLSPSSRMKKLPQGRPVP) are disordered. Low complexity predominate over residues 1302 to 1313 (SLNSSQRLSPSS).

In terms of assembly, component of the heterodimeric RalGAP1 complex with RALGAPA1 and of the heterodimeric RalGAP2 complex with RALGAPA2. Heterodimerization is required for activity. As to expression, abundantly expressed in testis, pancreas, lung, thymus, brown fat, and white fat. Expressed at lower levels in the brain.

Functionally, non-catalytic subunit of the heterodimeric RalGAP1 and RalGAP2 complexes which act as GTPase activators for the Ras-like small GTPases RALA and RALB. This Mus musculus (Mouse) protein is Ral GTPase-activating protein subunit beta (Ralgapb).